Reading from the N-terminus, the 241-residue chain is Glucosamine-6-phosphate deaminase (241 aa).

Residue aspartate 67 is the Proton acceptor; for enolization step of the active site. Asparagine 136 (for ring-opening step) is an active-site residue. Histidine 138 (proton acceptor; for ring-opening step) is an active-site residue. Catalysis depends on glutamate 143, which acts as the For ring-opening step.

Belongs to the glucosamine/galactosamine-6-phosphate isomerase family. NagB subfamily.

It carries out the reaction alpha-D-glucosamine 6-phosphate + H2O = beta-D-fructose 6-phosphate + NH4(+). Its pathway is amino-sugar metabolism; N-acetylneuraminate degradation; D-fructose 6-phosphate from N-acetylneuraminate: step 5/5. Catalyzes the reversible isomerization-deamination of glucosamine 6-phosphate (GlcN6P) to form fructose 6-phosphate (Fru6P) and ammonium ion. The sequence is that of Glucosamine-6-phosphate deaminase from Bacillus pumilus (strain SAFR-032).